Consider the following 240-residue polypeptide: Flagellar L-ring protein (240 aa).

The N-terminal stretch at Met1 to Gly20 is a signal peptide. A lipid anchor (N-palmitoyl cysteine) is attached at Cys21. The S-diacylglycerol cysteine moiety is linked to residue Cys21.

The protein belongs to the FlgH family. The basal body constitutes a major portion of the flagellar organelle and consists of four rings (L,P,S, and M) mounted on a central rod.

The protein resides in the cell outer membrane. The protein localises to the bacterial flagellum basal body. In terms of biological role, assembles around the rod to form the L-ring and probably protects the motor/basal body from shearing forces during rotation. This chain is Flagellar L-ring protein, found in Sulfurimonas denitrificans (strain ATCC 33889 / DSM 1251) (Thiomicrospira denitrificans (strain ATCC 33889 / DSM 1251)).